The chain runs to 361 residues: Adenosine kinase (361 aa).

The short motif at 7-15 (PKPKKLKVE) is the Nuclear localization signal element. Aspartate 34 provides a ligand contact to adenosine. Serine 48 contributes to the Mg(2+) binding site. Tyrosine 76 carries the post-translational modification Phosphotyrosine. A Mg(2+)-binding site is contributed by asparagine 147. Position 305 (glutamine 305) interacts with adenosine. Aspartate 316 is an active-site residue. The Proton acceptor role is filled by aspartate 316.

The protein belongs to the carbohydrate kinase PfkB family. In terms of assembly, monomer. Mg(2+) is required as a cofactor.

It localises to the nucleus. It catalyses the reaction adenosine + ATP = AMP + ADP + H(+). The protein operates within purine metabolism; AMP biosynthesis via salvage pathway; AMP from adenosine: step 1/1. Functionally, catalyzes the phosphorylation of the purine nucleoside adenosine at the 5' position in an ATP-dependent manner. Serves as a potential regulator of concentrations of extracellular adenosine and intracellular adenine nucleotides. The polypeptide is Adenosine kinase (Adk) (Rattus norvegicus (Rat)).